A 53-amino-acid chain; its full sequence is Non-classical export protein 1 (53 aa).

A helical transmembrane segment spans residues 7 to 29; it reads FLLGKFSDPLLAIMVGCLSYYVY.

This sequence belongs to the NCE101 family.

Its subcellular location is the membrane. Involved in a novel pathway of export of proteins that lack a cleavable signal sequence. May be part of the export machinery or may also be a substrate for non-classical export. The polypeptide is Non-classical export protein 1 (NCE101) (Saccharomyces cerevisiae (strain ATCC 204508 / S288c) (Baker's yeast)).